The primary structure comprises 75 residues: Small ribosomal subunit protein bS18 (75 aa).

It belongs to the bacterial ribosomal protein bS18 family. In terms of assembly, part of the 30S ribosomal subunit. Forms a tight heterodimer with protein bS6.

In terms of biological role, binds as a heterodimer with protein bS6 to the central domain of the 16S rRNA, where it helps stabilize the platform of the 30S subunit. This is Small ribosomal subunit protein bS18 from Mycoplasma mycoides subsp. mycoides SC (strain CCUG 32753 / NCTC 10114 / PG1).